The primary structure comprises 629 residues: tRNA uridine 5-carboxymethylaminomethyl modification enzyme MnmG (629 aa).

FAD is bound at residue 13–18; the sequence is GGGHAG. Position 273 to 287 (273 to 287) interacts with NAD(+); that stretch reads GPRYCPSIEDKIHRF.

Belongs to the MnmG family. In terms of assembly, homodimer. Heterotetramer of two MnmE and two MnmG subunits. The cofactor is FAD.

It localises to the cytoplasm. NAD-binding protein involved in the addition of a carboxymethylaminomethyl (cmnm) group at the wobble position (U34) of certain tRNAs, forming tRNA-cmnm(5)s(2)U34. The protein is tRNA uridine 5-carboxymethylaminomethyl modification enzyme MnmG of Shewanella amazonensis (strain ATCC BAA-1098 / SB2B).